We begin with the raw amino-acid sequence, 1021 residues long: Ribosome quality control complex subunit 2 (1021 aa).

Residues 348–388 adopt a coiled-coil conformation; it reads IEAQKLKKRAHDRLATAERRLESAKEDQARKLQSLQDAQAT. The disordered stretch occupies residues 457-484; that stretch reads NPESVDNSDESSETSDDDLDDSDDDNKV. Over residues 462–480 the composition is skewed to acidic residues; the sequence is DNSDESSETSDDDLDDSDD. Position 478 is a phosphoserine (Ser478). Coiled coils occupy residues 507 to 546 and 698 to 727; these read NARK…DLKR and DEKS…LKME. Composition is skewed to polar residues over residues 746 to 761 and 839 to 856; these read YNED…TTGS and ISSQ…TPTA. Disordered stretches follow at residues 746 to 801 and 832 to 905; these read YNED…TALE and HAAR…VESF. A compositionally biased stretch (basic and acidic residues) spans 876 to 905; sequence DQSRNSEAENEKGLSTEQRDEKKHAKVESF.

Belongs to the NEMF family. In terms of assembly, component of the ribosome quality control complex (RQC), composed of the E3 ubiquitin ligase rkr1/ltn1, rqc1 and mtr1/rqc2, as well as cdc48 and its ubiquitin-binding cofactors associated with the 60S ribosomal subunit. RQC2 binds to the 40S-binding surface of tRNAs.

The protein resides in the cytoplasm. Key component of the ribosome quality control complex (RQC), a ribosome-associated complex that mediates the extraction of incompletely synthesized nascent chains from stalled ribosomes as well as their ubiquitin-mediated proteasomal degradation. Thereby, frees 60S subunit ribosomes from the stalled translation complex and prevents the accumulation of nascent polypeptide chains that are potentially toxic for the cell. Within the RQC complex, mtr1/rqc2 specifically binds stalled 60S ribosomal subunits by recognizing an exposed, nascent chain-conjugated tRNA moiety and promotes the recruitment of rkr1/ltn1 to stalled 60S subunits. Following binding to stalled 60S ribosomal subunits, mtr1/rqc2 mediates CAT tailing by recruiting alanine- and threonine-charged tRNA to the A-site and directing the elongation of stalled nascent chains independently of mRNA or 40S subunits, leading to non-templated C-terminal Ala and Thr extensions (CAT tails). CAT tails promote the rkr1/ltn1-mediated ubiquitination of incompletely synthesized nascent polypeptides: CAT tailing facilitates rkr1/ltn1-dependent ubiquitination by exposing lysine residues that would otherwise remain buried in the ribosomal exit tunnel. Following ubiquitination, incompletely synthesized nascent polypeptides are recognized by CDC48 and degraded by the proteasome. CAT-tailed proteins tend to aggregate and sequester chaperones and can induce proteotoxic stress; their rkr1/ltn1-dependent ubiquitination and degradation is required to prevent proteotoxic stress. This Schizosaccharomyces pombe (strain 972 / ATCC 24843) (Fission yeast) protein is Ribosome quality control complex subunit 2.